We begin with the raw amino-acid sequence, 354 residues long: MKIAVLPGDGIGPEVVREALKVLEVVEKKTGKTFEKVFGHIGGDAIDRFGEPLPEETKKICLEADAIFLGSVGGPKWDDLPPEKRPEIGGLLALRKMLNLYANIRPIKVYRSLVHVSPLKEKVIGSGVDLVTVRELSYGVYYGQPRGLDEEKGFDTMIYDRKTVERIARTAFEIAKNRRKKVTSVDKANVLYSSMLWRKVVNEVAREYPDVELTHIYVDNAAMQLILKPSQFDVILTTNMFGDILSDESAALPGSLGLLPSASFGDKNLYEPAGGSAPDIAGKNIANPIAQILSLAMMLEHSFGMVEEARKIERAVELVIEEGYRTRDIAEDPEKAVSTSQMGDLICKKLEEIW.

NAD(+) is bound at residue 74 to 87; sequence GPKWDDLPPEKRPE. Arg95, Arg105, Arg134, and Asp219 together coordinate substrate. Residues Asp219, Asp243, and Asp247 each contribute to the Mg(2+) site. 275–287 serves as a coordination point for NAD(+); sequence GSAPDIAGKNIAN.

It belongs to the isocitrate and isopropylmalate dehydrogenases family. LeuB type 1 subfamily. In terms of assembly, homodimer. The cofactor is Mg(2+). Mn(2+) is required as a cofactor.

The protein localises to the cytoplasm. The enzyme catalyses (2R,3S)-3-isopropylmalate + NAD(+) = 4-methyl-2-oxopentanoate + CO2 + NADH. The protein operates within amino-acid biosynthesis; L-leucine biosynthesis; L-leucine from 3-methyl-2-oxobutanoate: step 3/4. Catalyzes the oxidation of 3-carboxy-2-hydroxy-4-methylpentanoate (3-isopropylmalate) to 3-carboxy-4-methyl-2-oxopentanoate. The product decarboxylates to 4-methyl-2 oxopentanoate. The sequence is that of 3-isopropylmalate dehydrogenase (leuB) from Thermotoga maritima (strain ATCC 43589 / DSM 3109 / JCM 10099 / NBRC 100826 / MSB8).